The sequence spans 485 residues: D-alanine--D-alanyl carrier protein ligase (485 aa).

144 to 145 (TS) lines the ATP pocket. D189 serves as a coordination point for D-alanine. ATP is bound at residue 284-289 (NTYGPT). V293 contacts D-alanine. ATP is bound by residues D365 and K473. Residue K473 coordinates D-alanine.

The protein belongs to the ATP-dependent AMP-binding enzyme family. DltA subfamily.

It is found in the cytoplasm. It catalyses the reaction holo-[D-alanyl-carrier protein] + D-alanine + ATP = D-alanyl-[D-alanyl-carrier protein] + AMP + diphosphate. The protein operates within cell wall biogenesis; lipoteichoic acid biosynthesis. Its function is as follows. Catalyzes the first step in the D-alanylation of lipoteichoic acid (LTA), the activation of D-alanine and its transfer onto the D-alanyl carrier protein (Dcp) DltC. In an ATP-dependent two-step reaction, forms a high energy D-alanyl-AMP intermediate, followed by transfer of the D-alanyl residue as a thiol ester to the phosphopantheinyl prosthetic group of the Dcp. D-alanylation of LTA plays an important role in modulating the properties of the cell wall in Gram-positive bacteria, influencing the net charge of the cell wall. This Staphylococcus aureus (strain MRSA252) protein is D-alanine--D-alanyl carrier protein ligase.